A 478-amino-acid chain; its full sequence is Protein nucleotidyltransferase YdiU (478 aa).

ATP is bound by residues Gly84, Gly86, Arg87, Lys107, Asp119, Gly120, Arg170, and Arg177. Asp246 (proton acceptor) is an active-site residue. Positions 247 and 256 each coordinate Mg(2+). Asp256 is a binding site for ATP.

This sequence belongs to the SELO family. Mg(2+) serves as cofactor. Requires Mn(2+) as cofactor.

The enzyme catalyses L-seryl-[protein] + ATP = 3-O-(5'-adenylyl)-L-seryl-[protein] + diphosphate. It catalyses the reaction L-threonyl-[protein] + ATP = 3-O-(5'-adenylyl)-L-threonyl-[protein] + diphosphate. It carries out the reaction L-tyrosyl-[protein] + ATP = O-(5'-adenylyl)-L-tyrosyl-[protein] + diphosphate. The catalysed reaction is L-histidyl-[protein] + UTP = N(tele)-(5'-uridylyl)-L-histidyl-[protein] + diphosphate. The enzyme catalyses L-seryl-[protein] + UTP = O-(5'-uridylyl)-L-seryl-[protein] + diphosphate. It catalyses the reaction L-tyrosyl-[protein] + UTP = O-(5'-uridylyl)-L-tyrosyl-[protein] + diphosphate. Its function is as follows. Nucleotidyltransferase involved in the post-translational modification of proteins. It can catalyze the addition of adenosine monophosphate (AMP) or uridine monophosphate (UMP) to a protein, resulting in modifications known as AMPylation and UMPylation. The polypeptide is Protein nucleotidyltransferase YdiU (Escherichia coli (strain ATCC 8739 / DSM 1576 / NBRC 3972 / NCIMB 8545 / WDCM 00012 / Crooks)).